The primary structure comprises 358 residues: GMP reductase (358 aa).

NADP(+)-binding positions include 26 to 27 (SR), Lys78, 130 to 132 (DVA), and 181 to 182 (IG). K(+) contacts are provided by Gly182, Gly184, and Cys187. Residue Cys187 is the Thioimidate intermediate of the active site. Thr189 functions as the Proton donor/acceptor in the catalytic mechanism. Arg190 contacts K(+). GMP contacts are provided by residues 220–222 (DGG), 243–244 (GG), 269–271 (GMS), and 287–291 (RASEG). Residues Met270, 286 to 287 (YR), and 315 to 318 (SACT) contribute to the NADP(+) site.

Belongs to the IMPDH/GMPR family. GuaC type 1 subfamily. As to quaternary structure, homotetramer.

The catalysed reaction is IMP + NH4(+) + NADP(+) = GMP + NADPH + 2 H(+). In terms of biological role, catalyzes the irreversible NADPH-dependent deamination of GMP to IMP. It functions in the conversion of nucleobase, nucleoside and nucleotide derivatives of G to A nucleotides, and in maintaining the intracellular balance of A and G nucleotides. The chain is GMP reductase from Caenorhabditis elegans.